We begin with the raw amino-acid sequence, 348 residues long: Phosphate acyltransferase (348 aa).

Belongs to the PlsX family. As to quaternary structure, homodimer. Probably interacts with PlsY.

The protein localises to the cytoplasm. It carries out the reaction a fatty acyl-[ACP] + phosphate = an acyl phosphate + holo-[ACP]. Its pathway is lipid metabolism; phospholipid metabolism. Catalyzes the reversible formation of acyl-phosphate (acyl-PO(4)) from acyl-[acyl-carrier-protein] (acyl-ACP). This enzyme utilizes acyl-ACP as fatty acyl donor, but not acyl-CoA. This chain is Phosphate acyltransferase, found in Rhizorhabdus wittichii (strain DSM 6014 / CCUG 31198 / JCM 15750 / NBRC 105917 / EY 4224 / RW1) (Sphingomonas wittichii).